A 631-amino-acid polypeptide reads, in one-letter code: MSKSHAAYIDYALRRTTNMPVEMMGSDVVRLKDYQHFVARVFLGLDSMHSLLLFHETGVGKTMTTVYILKHLKDIYTNWAIILLVKKALIEDPWMNTILRYAPEITKDCIFINYDDQNFRNKFFTNIKTINSKSRICVIIDECHNFISKSLIKEDGKIRPTRSVYNFLSKTIALKNHKMICLSATPIVNSVQEFTMLVNLLRPGSLQHQSLFENKRLVDEKELVSKLGGLCSYIVNNEFSIFDDVEGSASFAKKTVLMRYVNMSKKQEEIYQKAKLAEIKTGISSFRILRRMATTFTFDSFPERQNRDPGEYAQEIATLYNDFKNSLRNREFSKSALDTFKKGELLKGDASAADISLFTELKEKSVKFIDVCLGILASHGKCLVFEPFVNQSGIEILLLYFKVFGISNIEFSSRTKDTRIKAVAEFNQESNTNGECIKTCVFSSSGGEGISFFSINDIFILDMTWNEASLRQIVGRAIRLNSHVLTPPERRYVNVHFIMARLSNGMPTVDEDLFEIIQSKSKEFVQLFRVFKHTSLEWIHANEKDFSPIDNESGWKTLVSRAIDLSSKKNITNKLIEGTNIWYSNSNRLMSINRGFKGVDGRVYDVDGNYLHDMPDNPVIKIHDGKLIYIF.

One can recognise a Helicase ATP-binding domain in the interval 42–204 (FLGLDSMHSL…TMLVNLLRPG (163 aa)). Residue 55-62 (HETGVGKT) coordinates ATP. Positions 141–144 (DECH) match the DEXH box motif. The Helicase C-terminal domain occupies 367 to 532 (KFIDVCLGIL…EFVQLFRVFK (166 aa)). The segment at 457–524 (DIFILDMTWN…EIIQSKSKEF (68 aa)) is binding to the cap-specific mRNA (nucleoside-2'-O-)-methyltransferase.

Belongs to the helicase family. NPH I subfamily. As to quaternary structure, monomer. Interacts (via C-terminus) with RAP94/OPG109 (via N-terminus). Interacts with the cap-specific mRNA (nucleoside-2'-O-)-methyltransferase OPG102.

It is found in the virion. It carries out the reaction a ribonucleoside 5'-triphosphate + H2O = a ribonucleoside 5'-diphosphate + phosphate + H(+). In terms of biological role, DNA-dependent ATPase that acts as a 5' to 3' translocase on single-stranded DNA and thereby plays a role in transcription termination of viral early genes. Uses forward translocation in concert with the viral RNA polymerase RAP94/OPG109 subunit and the capping enzyme/VTF to catalyze release of UUUUUNU-containing nascent RNA from the elongation complex. In addition, acts as a positive elongation factor to assist transcription through problematic sequences. This is Nucleoside triphosphatase I (OPG123) from Vaccinia virus (strain Copenhagen) (VACV).